Here is a 152-residue protein sequence, read N- to C-terminus: MKKQERQRYIKRLLSSNEIERQEDFVKLLRAEDIDVTQATISRDIKDMQLVKVPSATGGYHYSMPVQKQMDTEKKLKRTLKDAYVSYATQDKFVLIKVLPGNGPALATLIEAMHYDEIFGTLGDDAHVLIICKSLAMTLELQQKIQRLLSDH.

It belongs to the ArgR family.

Its subcellular location is the cytoplasm. The protein operates within amino-acid biosynthesis; L-arginine biosynthesis [regulation]. Its function is as follows. Regulates arginine biosynthesis genes. The sequence is that of Arginine repressor from Lactiplantibacillus plantarum (strain ATCC BAA-793 / NCIMB 8826 / WCFS1) (Lactobacillus plantarum).